The following is a 421-amino-acid chain: Medium-chain specific acyl-CoA dehydrogenase, mitochondrial (421 aa).

The N-terminal 25 residues, 1-25, are a transit peptide targeting the mitochondrion; sequence MAAAFRRGCRVLRSVSHFECRTQHS. N6-acetyllysine; alternate is present on residues lysine 30 and lysine 69. Residues lysine 30 and lysine 69 each carry the N6-succinyllysine; alternate modification. Lysine 79 carries the post-translational modification N6-acetyllysine. FAD is bound at residue 158–167; sequence YCVTEPSAGS. Serine 167 is a binding site for octanoyl-CoA. Lysine 179 carries the post-translational modification N6-succinyllysine. 191–193 serves as a coordination point for FAD; that stretch reads WIT. An N6-acetyllysine; alternate modification is found at lysine 212. Lysine 212 carries the post-translational modification N6-succinyllysine; alternate. Octanoyl-CoA is bound at residue serine 216. N6-acetyllysine; alternate occurs at positions 217, 235, 259, and 271. N6-succinyllysine; alternate is present on residues lysine 217, lysine 235, lysine 259, and lysine 271. Positions 278 and 281 each coordinate octanoyl-CoA. An N6-acetyllysine modification is found at lysine 301. FAD is bound by residues 306–308 and 316–317; these read RKT and HQ. Arginine 349 and threonine 351 together coordinate octanoyl-CoA. Threonine 351 carries the post-translational modification Phosphothreonine. 374–378 contacts FAD; the sequence is QIFGG. Glutamate 401 serves as a coordination point for octanoyl-CoA. Glutamate 401 acts as the Proton acceptor in catalysis. 402-405 provides a ligand contact to FAD; sequence GTAQ.

This sequence belongs to the acyl-CoA dehydrogenase family. Homotetramer. Interacts with the heterodimeric electron transfer flavoprotein ETF. Requires FAD as cofactor. In terms of processing, acetylated. Could occur at proximity of the cofactor-binding sites and reduce the catalytic activity. Could be deacetylated by SIRT3.

The protein localises to the mitochondrion matrix. The catalysed reaction is a medium-chain 2,3-saturated fatty acyl-CoA + oxidized [electron-transfer flavoprotein] + H(+) = a medium-chain (2E)-enoyl-CoA + reduced [electron-transfer flavoprotein]. It catalyses the reaction pentanoyl-CoA + oxidized [electron-transfer flavoprotein] + H(+) = (2E)-pentenoyl-CoA + reduced [electron-transfer flavoprotein]. The enzyme catalyses hexanoyl-CoA + oxidized [electron-transfer flavoprotein] + H(+) = (2E)-hexenoyl-CoA + reduced [electron-transfer flavoprotein]. It carries out the reaction octanoyl-CoA + oxidized [electron-transfer flavoprotein] + H(+) = (2E)-octenoyl-CoA + reduced [electron-transfer flavoprotein]. The catalysed reaction is decanoyl-CoA + oxidized [electron-transfer flavoprotein] + H(+) = (2E)-decenoyl-CoA + reduced [electron-transfer flavoprotein]. It catalyses the reaction dodecanoyl-CoA + oxidized [electron-transfer flavoprotein] + H(+) = (2E)-dodecenoyl-CoA + reduced [electron-transfer flavoprotein]. The enzyme catalyses tetradecanoyl-CoA + oxidized [electron-transfer flavoprotein] + H(+) = (2E)-tetradecenoyl-CoA + reduced [electron-transfer flavoprotein]. It carries out the reaction oxidized [electron-transfer flavoprotein] + hexadecanoyl-CoA + H(+) = (2E)-hexadecenoyl-CoA + reduced [electron-transfer flavoprotein]. The protein operates within lipid metabolism; mitochondrial fatty acid beta-oxidation. Functionally, medium-chain specific acyl-CoA dehydrogenase is one of the acyl-CoA dehydrogenases that catalyze the first step of mitochondrial fatty acid beta-oxidation, an aerobic process breaking down fatty acids into acetyl-CoA and allowing the production of energy from fats. The first step of fatty acid beta-oxidation consists in the removal of one hydrogen from C-2 and C-3 of the straight-chain fatty acyl-CoA thioester, resulting in the formation of trans-2-enoyl-CoA. Electron transfer flavoprotein (ETF) is the electron acceptor that transfers electrons to the main mitochondrial respiratory chain via ETF-ubiquinone oxidoreductase (ETF dehydrogenase). Among the different mitochondrial acyl-CoA dehydrogenases, medium-chain specific acyl-CoA dehydrogenase acts specifically on acyl-CoAs with saturated 6 to 12 carbons long primary chains. The polypeptide is Medium-chain specific acyl-CoA dehydrogenase, mitochondrial (Mus musculus (Mouse)).